Here is a 475-residue protein sequence, read N- to C-terminus: Putative aldehyde dehydrogenase (475 aa).

NAD(+)-binding positions include 146 to 147 (WN) and 223 to 224 (GS). Glu245 functions as the Proton acceptor in the catalytic mechanism. Leu246 provides a ligand contact to NAD(+). The active-site Nucleophile is Cys279. Residue Glu379 coordinates NAD(+).

It belongs to the aldehyde dehydrogenase family.

The enzyme catalyses an aldehyde + NAD(+) + H2O = a carboxylate + NADH + 2 H(+). The chain is Putative aldehyde dehydrogenase from Staphylococcus aureus (strain MSSA476).